Here is a 270-residue protein sequence, read N- to C-terminus: 4-hydroxy-tetrahydrodipicolinate reductase (270 aa).

NAD(+) contacts are provided by residues 11–16 and Glu37; that span reads GCNGRM. Arg38 serves as a coordination point for NADP(+). NAD(+) is bound by residues 101–103 and 125–128; these read GTT and ASNY. Residue His158 is the Proton donor/acceptor of the active site. His159 contributes to the (S)-2,3,4,5-tetrahydrodipicolinate binding site. The Proton donor role is filled by Lys162. 168 to 169 provides a ligand contact to (S)-2,3,4,5-tetrahydrodipicolinate; sequence GT.

It belongs to the DapB family.

It is found in the cytoplasm. The catalysed reaction is (S)-2,3,4,5-tetrahydrodipicolinate + NAD(+) + H2O = (2S,4S)-4-hydroxy-2,3,4,5-tetrahydrodipicolinate + NADH + H(+). The enzyme catalyses (S)-2,3,4,5-tetrahydrodipicolinate + NADP(+) + H2O = (2S,4S)-4-hydroxy-2,3,4,5-tetrahydrodipicolinate + NADPH + H(+). The protein operates within amino-acid biosynthesis; L-lysine biosynthesis via DAP pathway; (S)-tetrahydrodipicolinate from L-aspartate: step 4/4. Its function is as follows. Catalyzes the conversion of 4-hydroxy-tetrahydrodipicolinate (HTPA) to tetrahydrodipicolinate. This Aeromonas salmonicida (strain A449) protein is 4-hydroxy-tetrahydrodipicolinate reductase.